A 223-amino-acid polypeptide reads, in one-letter code: Ribose-5-phosphate isomerase A (223 aa).

Residues 26–29, 82–85, and 95–98 contribute to the substrate site; these read TGST, DGAD, and KGGG. Glu-104 functions as the Proton acceptor in the catalytic mechanism. Lys-122 contacts substrate.

It belongs to the ribose 5-phosphate isomerase family. Homodimer.

The enzyme catalyses aldehydo-D-ribose 5-phosphate = D-ribulose 5-phosphate. The protein operates within carbohydrate degradation; pentose phosphate pathway; D-ribose 5-phosphate from D-ribulose 5-phosphate (non-oxidative stage): step 1/1. Its function is as follows. Catalyzes the reversible conversion of ribose-5-phosphate to ribulose 5-phosphate. This Streptococcus agalactiae serotype Ia (strain ATCC 27591 / A909 / CDC SS700) protein is Ribose-5-phosphate isomerase A.